Reading from the N-terminus, the 569-residue chain is Formate hydrogenlyase subunit 5 (569 aa).

Residues 538–569 (MTVVDVRKKKSKVVPYKELERYSIERKNSPLK) constitute a propeptide that is removed on maturation.

Belongs to the complex I 49 kDa subunit family. FHL comprises of a formate dehydrogenase, unidentified electron carriers and a hydrogenase (isoenzyme 3). In this non-energy conserving pathway molecular hydrogen and carbodioxide from formate are released. The cofactor is [4Fe-4S] cluster. Ni(2+) is required as a cofactor.

The sequence is that of Formate hydrogenlyase subunit 5 (hycE) from Escherichia coli (strain K12).